The primary structure comprises 62 residues: Small ribosomal subunit protein uS14 (62 aa).

Residues Cys25, Cys28, Cys41, and Cys44 each coordinate Zn(2+).

Belongs to the universal ribosomal protein uS14 family. Zinc-binding uS14 subfamily. As to quaternary structure, part of the 30S ribosomal subunit. Contacts proteins S3 and S10. Zn(2+) is required as a cofactor.

Binds 16S rRNA, required for the assembly of 30S particles and may also be responsible for determining the conformation of the 16S rRNA at the A site. This chain is Small ribosomal subunit protein uS14, found in Persephonella marina (strain DSM 14350 / EX-H1).